The primary structure comprises 216 residues: Large ribosomal subunit protein uL1z (216 aa).

It belongs to the universal ribosomal protein uL1 family. As to quaternary structure, interacts with the GTPase NUG2.

This Arabidopsis thaliana (Mouse-ear cress) protein is Large ribosomal subunit protein uL1z (RPL10AA).